A 286-amino-acid chain; its full sequence is MKNILAIQSHVVFGHAGNSAAEFPMRRLGANVWPLNTVQFSNHTQYGKWTGCVMPPSHLTEIVQGIADIGQLAHCDAVLSGYLGSAEQGEHILGIVRQVKAANPQAKYFCDPVMGHPEKGCIVAPGVAEFHVRYALPASDIIAPNLIELEILSKHSVNNVDDAVQAARELIAQGPEIVLVKHLARAGYSSERFEMLLVTAQEAWHISRPLVDFGSRQPVGVGDVTSGLLLVKLLQGATLQQALEHVTAAVYEIMIATKTMQEYELQVVAAQDRIANPEHYFSATRL.

Residues S9 and 44–45 (TQ) each bind substrate. Residues D111, A143, E148, K181, and 208–211 (RPLV) contribute to the ATP site. Residue D223 participates in substrate binding.

The protein belongs to the pyridoxine kinase family. PdxY subfamily. Homodimer. Mg(2+) serves as cofactor.

It carries out the reaction pyridoxal + ATP = pyridoxal 5'-phosphate + ADP + H(+). The protein operates within cofactor metabolism; pyridoxal 5'-phosphate salvage; pyridoxal 5'-phosphate from pyridoxal: step 1/1. Functionally, pyridoxal kinase involved in the salvage pathway of pyridoxal 5'-phosphate (PLP). Catalyzes the phosphorylation of pyridoxal to PLP. The chain is Pyridoxal kinase PdxY from Salmonella choleraesuis (strain SC-B67).